Consider the following 268-residue polypeptide: L-proline trans-4-hydroxylase (268 aa).

Fe cation contacts are provided by histidine 113, aspartate 115, and histidine 218.

The protein belongs to the PhyH family. In terms of assembly, monomer. Requires Fe(2+) as cofactor.

The enzyme catalyses L-proline + 2-oxoglutarate + O2 = trans-4-hydroxy-L-proline + succinate + CO2. The protein operates within antibiotic biosynthesis. With respect to regulation, competitively inhibited by pyridine-2,4-dicarboxylate. Inhibited by diethyl pyrocarbonate (DEPC), 3,4-dihydroxybenzoate, pyridine-2,5-dicarboxylate, alpha,alpha'-dipyridyl, and some metal ions such as Co(2+) and Zn(2+). In terms of biological role, involved in the biosynthesis of the peptidolactone antibiotic etamycin (viridogrisein). Catalyzes the hydroxylation of free L-proline at the C-4 position to yield trans-4-hydroxy-L-proline. The sequence is that of L-proline trans-4-hydroxylase from Streptomyces griseoviridis.